A 422-amino-acid chain; its full sequence is MATSAMFILDLKGKTIISRNYRGDIDMTAIDKFIHLLMEKEEEGSAAPVLTYQDTNFVFIKHTNIYLVSACRSNVNVTMILSFLYKCVEVFSEYFKDVEEESVRDNFVVIYELLDEMMDFGFPQTTESRILQEYITQEGQKLISAPRPPMAVTNAVSWRSEGIKYRKNEVFLDVIESVNMLASANGTVLQSEIVGSVKMRVYLTGMPELRLGLNDKVLFEGSGRGKSKSVELEDVKFHQCVRLSRFDTDRTISFIPPDGAFELMSYRLTTVVKPLIWIETSIERHSHSRVSFIIKAKSQFKRRSTANNVEIIIPVPSDADSPKFKTSIGSVKYTPEQSAFVWTIKNFPGGKEYLLTAHLSLPSVMSEESEGRPPIKVKFEIPYFTTSGIQVRYLKIIEKSGYQALPWVRYITQNGEYEMRMK.

In terms of domain architecture, MHD spans 167–420 (KNEVFLDVIE…ITQNGEYEMR (254 aa)).

The protein belongs to the adaptor complexes medium subunit family. As to quaternary structure, adaptor protein complex 1 (AP-1) is a heterotetramer composed of two large adaptins (gamma- and beta'-type subunits), a medium adaptin (mu-type subunit AP47) and a small adaptin (sigma-type subunit AP19). Interacts (via N-terminus) with kvs-4. Expressed in the cholinergic motor neuron DA9.

It is found in the golgi apparatus. The protein localises to the cytoplasmic vesicle. The protein resides in the clathrin-coated vesicle membrane. It localises to the cell projection. Its subcellular location is the dendrite. Functionally, component of the adaptor complexes which link clathrin to receptors in coated vesicles. Clathrin-associated protein complexes are believed to interact with the cytoplasmic tails of membrane proteins, leading to their selection and concentration. Required for many aspects of development and behavior, including negative regulation of vulval differentiation. Required for the dendritic localization of potassium channel kvs-4 in the cholinergic motor neuron DA9. This Caenorhabditis elegans protein is AP-1 complex subunit mu-1-I (unc-101).